The primary structure comprises 31 residues: Protamine-1B (31 aa).

The disordered stretch occupies residues 1-31; sequence MPRRRRASRRIRRRRRPRVSRRRRRGGRRRR.

As to expression, testis.

The protein resides in the nucleus. The protein localises to the chromosome. In terms of biological role, protamines substitute for histones in the chromatin of sperm during the haploid phase of spermatogenesis. They compact sperm DNA into a highly condensed, stable and inactive complex. This chain is Protamine-1B, found in Oncorhynchus mykiss (Rainbow trout).